The sequence spans 350 residues: Galactokinase (350 aa).

Substrate is bound at residue 14–17; the sequence is EHTD. ATP is bound by residues Ser-46 and 96-102; that span reads GAGLSSS. The Mg(2+) site is built by Ser-102 and Glu-134. Asp-146 serves as the catalytic Proton acceptor. Tyr-196 is a binding site for substrate.

Belongs to the GHMP kinase family. GalK subfamily.

The protein localises to the cytoplasm. The catalysed reaction is alpha-D-galactose + ATP = alpha-D-galactose 1-phosphate + ADP + H(+). The protein operates within carbohydrate metabolism; galactose metabolism. In terms of biological role, catalyzes the transfer of the gamma-phosphate of ATP to D-galactose to form alpha-D-galactose-1-phosphate (Gal-1-P). The protein is Galactokinase of Thermotoga neapolitana.